The sequence spans 260 residues: Tropinone reductase 2 (260 aa).

18-41 (SRGIGYGIVEELASLGASVYTCSR) contacts NADP(+). S146 is a binding site for substrate. The active-site Proton acceptor is the Y159. Position 192 to 196 (192 to 196 (IATSL)) interacts with NADP(+).

The protein belongs to the short-chain dehydrogenases/reductases (SDR) family. In terms of assembly, homodimer.

The catalysed reaction is pseudotropine + NADP(+) = tropinone + NADPH + H(+). The protein operates within alkaloid biosynthesis; tropane alkaloid biosynthesis. Functionally, catalyzes the stereospecific reduction of tropinone to pseudotropine. This Datura stramonium (Jimsonweed) protein is Tropinone reductase 2 (TR2).